A 177-amino-acid polypeptide reads, in one-letter code: Large ribosomal subunit protein uL6 (177 aa).

The protein belongs to the universal ribosomal protein uL6 family. Part of the 50S ribosomal subunit.

Functionally, this protein binds to the 23S rRNA, and is important in its secondary structure. It is located near the subunit interface in the base of the L7/L12 stalk, and near the tRNA binding site of the peptidyltransferase center. This is Large ribosomal subunit protein uL6 from Mesorhizobium japonicum (strain LMG 29417 / CECT 9101 / MAFF 303099) (Mesorhizobium loti (strain MAFF 303099)).